The primary structure comprises 113 residues: MAGVGAAFRRLGALSGAGALGLASYGAHGAQFPDAYGKELFDKANKHHFLHSLALLGVPSCRKPVWAGLLLASGTTLFCTSFYYQALSGDTSIQTLGPVGGSLLILGWLALAF.

The N-terminal stretch at 1 to 29 (MAGVGAAFRRLGALSGAGALGLASYGAHG) is a signal peptide. Residues 30 to 63 (AQFPDAYGKELFDKANKHHFLHSLALLGVPSCRK) lie on the Extracellular side of the membrane. Lysine 43 carries the N6-acetyllysine modification. The chain crosses the membrane as a helical span at residues 64 to 84 (PVWAGLLLASGTTLFCTSFYY). Topologically, residues 85–92 (QALSGDTS) are cytoplasmic. The helical transmembrane segment at 93 to 113 (IQTLGPVGGSLLILGWLALAF) threads the bilayer.

This sequence belongs to the TMEM256 family.

Its subcellular location is the membrane. This chain is Transmembrane protein 256 (Tmem256), found in Mus musculus (Mouse).